Reading from the N-terminus, the 122-residue chain is MIQVQSRMKVADNTGAKELMCIKVLGGSWRKYANIGDVVVASVKNATPGGVVKKGDVVKCVIVRSKKGVRRPDGSYIRFDENAAVIIKDDKNPRGTRIFGPVARELREKNFMKIVSLAPEVL.

Belongs to the universal ribosomal protein uL14 family. As to quaternary structure, part of the 50S ribosomal subunit. Forms a cluster with proteins L3 and L19. In the 70S ribosome, L14 and L19 interact and together make contacts with the 16S rRNA in bridges B5 and B8.

Binds to 23S rRNA. Forms part of two intersubunit bridges in the 70S ribosome. The polypeptide is Large ribosomal subunit protein uL14 (Ruminiclostridium cellulolyticum (strain ATCC 35319 / DSM 5812 / JCM 6584 / H10) (Clostridium cellulolyticum)).